The chain runs to 865 residues: DNA topoisomerase 3-beta (865 aa).

In terms of domain architecture, Toprim spans 6–151; that stretch reads RVLMVAEKPS…KVYRARFSSV (146 aa). Mg(2+) contacts are provided by glutamate 12, aspartate 116, and aspartate 118. The 421-residue stretch at 167–587 folds into the Topo IA-type catalytic domain; that stretch reads NRDEALAVDA…HVIQQFRRKF (421 aa). Positions 209-214 are interaction with DNA; that stretch reads SYGPCQ. Tyrosine 331 functions as the O-(5'-phospho-DNA)-tyrosine intermediate in the catalytic mechanism. Residues 833–853 are compositionally biased toward basic residues; it reads RRGGRGRGRGRGRGRGGRRGS. Residues 833 to 865 form a disordered region; that stretch reads RRGGRGRGRGRGRGRGGRRGSKSVDPKMSFRDF. Residues 854-865 show a composition bias toward basic and acidic residues; that stretch reads KSVDPKMSFRDF.

It belongs to the type IA topoisomerase family. Requires Mg(2+) as cofactor.

It catalyses the reaction ATP-independent breakage of single-stranded DNA, followed by passage and rejoining.. In terms of biological role, releases the supercoiling and torsional tension of DNA introduced during the DNA replication and transcription by transiently cleaving and rejoining one strand of the DNA duplex. Introduces a single-strand break via transesterification at a target site in duplex DNA. The scissile phosphodiester is attacked by the catalytic tyrosine of the enzyme, resulting in the formation of a DNA-(5'-phosphotyrosyl)-enzyme intermediate and the expulsion of a 3'-OH DNA strand. The free DNA strand than undergoes passage around the unbroken strand thus removing DNA supercoils. Finally, in the religation step, the DNA 3'-OH attacks the covalent intermediate to expel the active-site tyrosine and restore the DNA phosphodiester backbone. In Arabidopsis thaliana (Mouse-ear cress), this protein is DNA topoisomerase 3-beta.